Consider the following 211-residue polypeptide: Transcriptional regulator GfcR (211 aa).

It belongs to the purine/pyrimidine phosphoribosyltransferase family. GfcR subfamily.

Its function is as follows. DNA-binding transcriptional regulator that functions as a regulator of central sugar catabolic pathways. This Halorubrum lacusprofundi (strain ATCC 49239 / DSM 5036 / JCM 8891 / ACAM 34) protein is Transcriptional regulator GfcR.